The primary structure comprises 385 residues: MHMPKGFLSFGINIGIKDDTKDFGVIYSEIPCKATAVFTKNNFPGAPVIVGKEHVRSGVLQAIVINSKNSNVATGEKGIQNSREICKIIGESLGIKETLVLPSSTGVIGVPLKMEIILPACKKAKSLLKPGNLEEVAEAIMTTDTRKKISSRNIKTKSGQGTIYGIAKGAGMIEPNMATMLCYILSDVSLPEGTDLYSILKSSVDQSFNCLTIDSDTSTSDTVALLCNGLSGESSVQDFSKALTEICIDLTKLIATDGEGATKLIELTISGAKSEAQARKIGKSILNSPLVKTAIYGGDPNWGRLIMAVGKVFDEPIPFEGLQIYFGTLPVKEANPETLKKLSEYLKNNTEISLNVVLNVGTISMKFWGCDFTEKYIEENAYYTT.

Residues Thr142, Lys168, Thr179, Glu259, Asn380, and Thr385 each contribute to the substrate site. The active-site Nucleophile is Thr179.

The protein belongs to the ArgJ family. Heterotetramer of two alpha and two beta chains.

The protein resides in the cytoplasm. The catalysed reaction is N(2)-acetyl-L-ornithine + L-glutamate = N-acetyl-L-glutamate + L-ornithine. The enzyme catalyses L-glutamate + acetyl-CoA = N-acetyl-L-glutamate + CoA + H(+). It functions in the pathway amino-acid biosynthesis; L-arginine biosynthesis; L-ornithine and N-acetyl-L-glutamate from L-glutamate and N(2)-acetyl-L-ornithine (cyclic): step 1/1. Its pathway is amino-acid biosynthesis; L-arginine biosynthesis; N(2)-acetyl-L-ornithine from L-glutamate: step 1/4. Catalyzes two activities which are involved in the cyclic version of arginine biosynthesis: the synthesis of N-acetylglutamate from glutamate and acetyl-CoA as the acetyl donor, and of ornithine by transacetylation between N(2)-acetylornithine and glutamate. The sequence is that of Arginine biosynthesis bifunctional protein ArgJ from Leptospira interrogans serogroup Icterohaemorrhagiae serovar Lai (strain 56601).